The primary structure comprises 108 residues: UPF0145 protein Patl_2194 (108 aa).

This sequence belongs to the UPF0145 family.

The polypeptide is UPF0145 protein Patl_2194 (Pseudoalteromonas atlantica (strain T6c / ATCC BAA-1087)).